We begin with the raw amino-acid sequence, 234 residues long: uncharacterized protein (234 aa).

LRR repeat units follow at residues 44 to 63 (LEFLSKINGGLTSISDLPKL), 64 to 84 (KLRKLELRVSGGLEVLAEKCP), 85 to 107 (NLTHLYLSGNKIKDLSTIEPLKQ), and 111 to 134 (LKSLDLFNCEVTNLNDYGENVFKL). The interval 161–234 (EGLDDEEEGE…GEEERGQKRK (74 aa)) is disordered. Residues 163–226 (LDDEEEGEHE…GEEDEEELGE (64 aa)) show a composition bias toward acidic residues.

Belongs to the ANP32 family. In terms of tissue distribution, expressed in activated stem cells, such as mobilized CD34+ cells and cord blood CD34+ cells, but not in resting bone marrow CD34+ cells. Expressed in a variety of neoplastic cell lines, mainly in prostatic adenocarcinoma cell lines. Not expressed in normal prostatic tissue.

This is an uncharacterized protein from Homo sapiens (Human).